Here is an 877-residue protein sequence, read N- to C-terminus: Dynamin (877 aa).

Residues 23–289 enclose the Dynamin-type G domain; sequence QLDLPQIAVV…LTNHIRDTLP (267 aa). Residues 33 to 40 are G1 motif; sequence GGQSAGKS. Residue 33 to 41 participates in GTP binding; it reads GGQSAGKSS. The segment at 59-61 is G2 motif; it reads VTR. A G3 motif region spans residues 131–134; sequence DLPG. The interval 200–203 is G4 motif; that stretch reads TKLD. GTP is bound by residues 200–206 and 231–234; these read TKLDLMD and NRSQ. The segment at 230–233 is G5 motif; that stretch reads VNRS. The 109-residue stretch at 513–621 folds into the PH domain; sequence QVIRKGHMVI…WKASFLRAGV (109 aa). 2 disordered regions span residues 623–648 and 740–834; these read PEKQETQENGDESASEESSSDPQLER and TVSS…SGAV. Acidic residues predominate over residues 630 to 641; sequence ENGDESASEESS. The GED domain occupies 650–741; that stretch reads VETIRNLVDS…IIGDVSMATV (92 aa). 3 positions are modified to phosphoserine: S756, S764, and S767. Over residues 788–826 the composition is skewed to pro residues; it reads PPLPPSTGRPAPAIPNRPGGGAPPLPGGRPGGSLPPPML.

It belongs to the TRAFAC class dynamin-like GTPase superfamily. Dynamin/Fzo/YdjA family.

The protein resides in the cytoplasm. Its subcellular location is the cytoskeleton. It catalyses the reaction GTP + H2O = GDP + phosphate + H(+). In terms of biological role, microtubule-associated force-producing protein which is involved in the production of microtubule bundles and which is able to bind and hydrolyze GTP. Implicated in endocytic protein sorting. The protein is Dynamin (shi) of Drosophila melanogaster (Fruit fly).